The primary structure comprises 75 residues: ATP synthase subunit c (75 aa).

Helical transmembrane passes span 4-24 (GLIAIGIGISMISGLGVGLGQ) and 54-74 (AVAESAAIYALVISILLMFAF).

This sequence belongs to the ATPase C chain family. F-type ATPases have 2 components, F(1) - the catalytic core - and F(0) - the membrane proton channel. F(1) has five subunits: alpha(3), beta(3), gamma(1), delta(1), epsilon(1). F(0) has three main subunits: a(1), b(2) and c(10-14). The alpha and beta chains form an alternating ring which encloses part of the gamma chain. F(1) is attached to F(0) by a central stalk formed by the gamma and epsilon chains, while a peripheral stalk is formed by the delta and b chains.

The protein resides in the cell membrane. Its function is as follows. F(1)F(0) ATP synthase produces ATP from ADP in the presence of a proton or sodium gradient. F-type ATPases consist of two structural domains, F(1) containing the extramembraneous catalytic core and F(0) containing the membrane proton channel, linked together by a central stalk and a peripheral stalk. During catalysis, ATP synthesis in the catalytic domain of F(1) is coupled via a rotary mechanism of the central stalk subunits to proton translocation. Key component of the F(0) channel; it plays a direct role in translocation across the membrane. A homomeric c-ring of between 10-14 subunits forms the central stalk rotor element with the F(1) delta and epsilon subunits. The polypeptide is ATP synthase subunit c (Mycoplasmopsis agalactiae (strain NCTC 10123 / CIP 59.7 / PG2) (Mycoplasma agalactiae)).